We begin with the raw amino-acid sequence, 54 residues long: Ductus ejaculatorius peptide 99B (54 aa).

The N-terminal stretch at Met1 to Ser21 is a signal peptide. Residue Gln22 is modified to Pyrrolidone carboxylic acid. Residue Asn25 is glycosylated (N-linked (GlcNAc...) asparagine). Cys40 and Cys52 form a disulfide bridge. Positions Arg53–Lys54 are excised as a propeptide.

This sequence to paragonial peptide B. In terms of tissue distribution, ductus ejaculatorius.

Its subcellular location is the secreted. Induces post-mating responses; increased oviposition and reduced receptivity. The chain is Ductus ejaculatorius peptide 99B (Dup99B) from Drosophila melanogaster (Fruit fly).